The chain runs to 88 residues: U-scoloptoxin(01)-Tl1a (88 aa).

A signal peptide spans 1-16 (MSVYGLLSLLIFIVLA). One can recognise a Chitin-binding type-2 domain in the interval 25-81 (GKDCSEKEEYLYDSSNCDIFYECDESLKPQRMMCGPGTGWNQDKLVCDFLTNIDCTR). Cysteines 58 and 71 form a disulfide.

This sequence belongs to the scoloptoxin-01 family. Post-translationally, contains 3 disulfide bonds. In terms of tissue distribution, expressed by the venom gland.

It is found in the secreted. In Thereuopoda longicornis (Long-legged centipede), this protein is U-scoloptoxin(01)-Tl1a.